Reading from the N-terminus, the 156-residue chain is Ribosome maturation factor RimP (156 aa).

It belongs to the RimP family.

The protein localises to the cytoplasm. In terms of biological role, required for maturation of 30S ribosomal subunits. In Bacillus mycoides (strain KBAB4) (Bacillus weihenstephanensis), this protein is Ribosome maturation factor RimP.